The sequence spans 423 residues: MTDPLSRAHAAALDAADPLRNLRDAFVFPQHGDDDQTYFVGNSLGLQPRAARAMVDEVLDQWGALAVEGHFTGPTQWLTYHQLVGDALARVVGAQPGEVVAMNTLSVNLHLMMASFYRPTAERGAILIEAGAFPSDRHAVESQLRLHGLDPATHLIEVEADEPNGTVSMSAIAEAIAQHGPHLALVLWPGIQYRTGQAFDLAEIVRLARAQGAAVGLDLAHAVGNLPLTLHDDGVDFAVWCHYKYLNAGPGAVGGCFVHARHATSDLPRMAGWWGHEQQTRFRMDPQFVPSPGAEGWQLSNPPVLALAPLRASLALFDQAGMAALRAKSEQLTGHLEQMIHARVPQVLQIVTPVEPARRGCQLSLRVAGGRARGRALFEHLHAAGVLGDWREPDVIRIAPVPLYNRFSDLHTFVEQVEAWAAA.

Residues leucine 105, serine 106, 133–136 (FPSD), aspartate 218, histidine 221, and tyrosine 243 each bind pyridoxal 5'-phosphate. Residue lysine 244 is modified to N6-(pyridoxal phosphate)lysine. Tryptophan 273 and asparagine 301 together coordinate pyridoxal 5'-phosphate.

The protein belongs to the kynureninase family. As to quaternary structure, homodimer. Pyridoxal 5'-phosphate is required as a cofactor.

It carries out the reaction L-kynurenine + H2O = anthranilate + L-alanine + H(+). It catalyses the reaction 3-hydroxy-L-kynurenine + H2O = 3-hydroxyanthranilate + L-alanine + H(+). It functions in the pathway amino-acid degradation; L-kynurenine degradation; L-alanine and anthranilate from L-kynurenine: step 1/1. It participates in cofactor biosynthesis; NAD(+) biosynthesis; quinolinate from L-kynurenine: step 2/3. Functionally, catalyzes the cleavage of L-kynurenine (L-Kyn) and L-3-hydroxykynurenine (L-3OHKyn) into anthranilic acid (AA) and 3-hydroxyanthranilic acid (3-OHAA), respectively. The polypeptide is Kynureninase (Xanthomonas axonopodis pv. citri (strain 306)).